A 1302-amino-acid chain; its full sequence is MERDEVSTSSSEGKSQEEAPMAEGLEPTEPIAFLKLFRFSTYGEIGWLFFGFIMCCIKALTLPAVVIIYSEFTSMLVDRAMQFGTSSNVHALPLFGGGKTLTNASREENNEALYDDSISYGILLTIASVVMFISGIFSVDVFNMVALRQVTRMRIKLFSSVIRQDIGWHDLASKQNFTQSMVDDVEKIRDGISEKVGHFVYLVVGFIITVAISFSYGWKLTLAVSSYIPLVILLNYYVAKFQGKLTAREQESYAGAGNLAEEILSSIRTVVSFGGEKSEVQRYENFLVPARKASQWKGAFSGLSDAVLKSMLYLSCAGAFWYGVNLIIDDRNVENKEYTPAILMIAFFGIIVGADNIARTAPFLESFATARGCATNLFKVIDLTSKIDPLSTDGKLLNYGLRGDVEFQDVFFRYPSRPEVIVHRGLNIRIRAGQTVALVGSSGCGKSTCVQLLQRFYDPVFGSVLLDDLDIRKYNIQWLRSNIAVVGQEPVLFLGTIAQNISYGKPGATQKEIEAAATQAGAHEFITNLPESYRSMIGERGSQLSGGQKQRIAIARALIQNPKILLLDEATSALDYQSEKQVQQALDLASKGRTTIVVSHRLSAIRGADKIVFIHDGKVLEEGSHDDLMALEGAYYNMVRAGDINMPDEVEKEDSIEDTKQKSLALFEKSFETSPLNFEKGQKNSVQFEEPIIKALIKDTNAQSAEAPPEKPNFFRTFSRILQLAKQEWCYLILGTISAVAVGFLYPAFAVIFGEFYAALAEKDPEDALRRTAVLSWACLGLAFLTGLVCFLQTYLFNYAGIWLTTRMRAMTFNAMVNQEVGWFDDENNSVGALSARLSGEAVDIQGAIGYPLSGMIQALSNFISSVSVAMYYNWKLALLCLANCPIIVGSVILEAKMMSNAVVREKQVIEEACRIATESITNIRTVAGLRREADVIREYTEEIQRVEVLIRQKLRWRGVLNSTMQASAFFAYAVALCYGGVLVSEGQLPFQDIIKVSETLLYGSMMLAQSLAFTPAFSAALIAGHRLFQILDRKPKIQSPMGTIKNTLAKQLNLFEGVRYRGIQFRYPTRPDAKILNGLDLEVLKGQTVALVGHSGCGKSTCVQLLQRYYDPDEGTIHIDHDDIQHDLTLDGVRTKLGIVSQEPTLFERSIAENIAYGDNRRSVSMVEIIAAAKSANAHSFIISLPNGYDTRMGARGTQLSGGQKQRIAIARALVRNPKILLLDEATSALDLQSEQLVQQALDTACSGRTCIVIAHRLSTVQNADVICVIQNGQVVEQGNHMQLISQGGIYAKLHKTQKDH.

Residues 1 to 23 (MERDEVSTSSSEGKSQEEAPMAE) form a disordered region. Residues 1–48 (MERDEVSTSSSEGKSQEEAPMAEGLEPTEPIAFLKLFRFSTYGEIGWL) lie on the Cytoplasmic side of the membrane. Residues 48–369 (LFFGFIMCCI…TAPFLESFAT (322 aa)) enclose the ABC transmembrane type-1 1 domain. A helical transmembrane segment spans residues 49–69 (FFGFIMCCIKALTLPAVVIIY). At 70-118 (SEFTSMLVDRAMQFGTSSNVHALPLFGGGKTLTNASREENNEALYDDSI) the chain is on the extracellular side. N103 carries N-linked (GlcNAc...) asparagine glycosylation. The helical transmembrane segment at 119-147 (SYGILLTIASVVMFISGIFSVDVFNMVAL) threads the bilayer. Over 148 to 194 (RQVTRMRIKLFSSVIRQDIGWHDLASKQNFTQSMVDDVEKIRDGISE) the chain is Cytoplasmic. Residues 195–215 (KVGHFVYLVVGFIITVAISFS) traverse the membrane as a helical segment. At 216 to 223 (YGWKLTLA) the chain is on the extracellular side. The helical transmembrane segment at 224-242 (VSSYIPLVILLNYYVAKFQ) threads the bilayer. At 243–302 (GKLTAREQESYAGAGNLAEEILSSIRTVVSFGGEKSEVQRYENFLVPARKASQWKGAFSG) the chain is on the cytoplasmic side. The helical transmembrane segment at 303–323 (LSDAVLKSMLYLSCAGAFWYG) threads the bilayer. Residues 324 to 341 (VNLIIDDRNVENKEYTPA) lie on the Extracellular side of the membrane. A helical membrane pass occupies residues 342–362 (ILMIAFFGIIVGADNIARTAP). Topologically, residues 363–731 (FLESFATARG…LQLAKQEWCY (369 aa)) are cytoplasmic. An ABC transporter 1 domain is found at 405 to 641 (VEFQDVFFRY…EGAYYNMVRA (237 aa)). Position 440 to 447 (440 to 447 (GSSGCGKS)) interacts with ATP. A helical membrane pass occupies residues 732 to 753 (LILGTISAVAVGFLYPAFAVIF). The 289-residue stretch at 732-1020 (LILGTISAVA…SLAFTPAFSA (289 aa)) folds into the ABC transmembrane type-1 2 domain. Residues 754–776 (GEFYAALAEKDPEDALRRTAVLS) are Extracellular-facing. The chain crosses the membrane as a helical span at residues 777–798 (WACLGLAFLTGLVCFLQTYLFN). Topologically, residues 799–852 (YAGIWLTTRMRAMTFNAMVNQEVGWFDDENNSVGALSARLSGEAVDIQGAIGYP) are cytoplasmic. A helical membrane pass occupies residues 853-873 (LSGMIQALSNFISSVSVAMYY). Residue N874 is a topological domain, extracellular. The chain crosses the membrane as a helical span at residues 875–894 (WKLALLCLANCPIIVGSVIL). The Cytoplasmic portion of the chain corresponds to 895–956 (EAKMMSNAVV…VEVLIRQKLR (62 aa)). A helical transmembrane segment spans residues 957-977 (WRGVLNSTMQASAFFAYAVAL). At 978-993 (CYGGVLVSEGQLPFQD) the chain is on the extracellular side. Residues 994–1014 (IIKVSETLLYGSMMLAQSLAF) form a helical membrane-spanning segment. The Cytoplasmic segment spans residues 1015–1302 (TPAFSAALIA…AKLHKTQKDH (288 aa)). Residues 1059–1298 (VRYRGIQFRY…GGIYAKLHKT (240 aa)) enclose the ABC transporter 2 domain. Position 1094 to 1101 (1094 to 1101 (GHSGCGKS)) interacts with ATP.

It belongs to the ABC transporter superfamily. ABCB family. Multidrug resistance exporter (TC 3.A.1.201) subfamily.

The protein localises to the membrane. It carries out the reaction ATP + H2O + xenobioticSide 1 = ADP + phosphate + xenobioticSide 2.. In Drosophila melanogaster (Fruit fly), this protein is Multidrug resistance protein homolog 65 (Mdr65).